The primary structure comprises 336 residues: Nuclear envelope-associated protein 3 (336 aa).

Coiled coils occupy residues 14–87 and 128–261; these read LKDL…IRAS and VLSK…LKKK. Positions 240–261 match the Bipartite nuclear localization signal motif; it reads KTKELEDQVENQRRIDQELKKK. A helical transmembrane segment spans residues 313-330; sequence LWDKSGFKIVVSMSMLIL.

In terms of assembly, forms homomers and heteromers with NEAP1 and NEAP2. Interacts with SUN1 and SUN2.

The protein localises to the nucleus inner membrane. It is found in the nucleus. It localises to the nucleoplasm. The protein is Nuclear envelope-associated protein 3 of Arabidopsis thaliana (Mouse-ear cress).